Consider the following 485-residue polypeptide: Glutamyl-tRNA(Gln) amidotransferase subunit A (485 aa).

Residues lysine 79 and serine 154 each act as charge relay system in the active site. Serine 178 functions as the Acyl-ester intermediate in the catalytic mechanism.

This sequence belongs to the amidase family. GatA subfamily. Heterotrimer of A, B and C subunits.

The enzyme catalyses L-glutamyl-tRNA(Gln) + L-glutamine + ATP + H2O = L-glutaminyl-tRNA(Gln) + L-glutamate + ADP + phosphate + H(+). In terms of biological role, allows the formation of correctly charged Gln-tRNA(Gln) through the transamidation of misacylated Glu-tRNA(Gln) in organisms which lack glutaminyl-tRNA synthetase. The reaction takes place in the presence of glutamine and ATP through an activated gamma-phospho-Glu-tRNA(Gln). The sequence is that of Glutamyl-tRNA(Gln) amidotransferase subunit A from Sulfurihydrogenibium sp. (strain YO3AOP1).